The following is a 159-amino-acid chain: MKINIMAVGKIKEDYINAGIKEFLKRLKPYTEVNVIEVDDERIPPNASGAQIEKVKEKEGERLLKNVPKNSYVIVLDVKGKPMTSEGLAKSIQNLQLQGYSNITFIIGGALGLSQKVLDTGDYILSFSHMTFTHQMIRLILLEQLYRAFKIIKGEPYHK.

Residues Leu-76, Gly-108, and 127 to 132 (FSHMTF) contribute to the S-adenosyl-L-methionine site.

The protein belongs to the RNA methyltransferase RlmH family. As to quaternary structure, homodimer.

It localises to the cytoplasm. It catalyses the reaction pseudouridine(1915) in 23S rRNA + S-adenosyl-L-methionine = N(3)-methylpseudouridine(1915) in 23S rRNA + S-adenosyl-L-homocysteine + H(+). Functionally, specifically methylates the pseudouridine at position 1915 (m3Psi1915) in 23S rRNA. This is Ribosomal RNA large subunit methyltransferase H from Halothermothrix orenii (strain H 168 / OCM 544 / DSM 9562).